Reading from the N-terminus, the 297-residue chain is Nucleotide-binding protein Bphy_0322 (297 aa).

8-15 (GISGSGKS) contacts ATP. 57–60 (DARS) is a GTP binding site.

The protein belongs to the RapZ-like family.

Its function is as follows. Displays ATPase and GTPase activities. The sequence is that of Nucleotide-binding protein Bphy_0322 from Paraburkholderia phymatum (strain DSM 17167 / CIP 108236 / LMG 21445 / STM815) (Burkholderia phymatum).